Reading from the N-terminus, the 122-residue chain is Small ribosomal subunit protein uS13 (122 aa).

The tract at residues 98-122 is disordered; that stretch reads VRGQRTHTNARTRKGPAKAIAGKKK.

This sequence belongs to the universal ribosomal protein uS13 family. In terms of assembly, part of the 30S ribosomal subunit. Forms a loose heterodimer with protein S19. Forms two bridges to the 50S subunit in the 70S ribosome.

Located at the top of the head of the 30S subunit, it contacts several helices of the 16S rRNA. In the 70S ribosome it contacts the 23S rRNA (bridge B1a) and protein L5 of the 50S subunit (bridge B1b), connecting the 2 subunits; these bridges are implicated in subunit movement. Contacts the tRNAs in the A and P-sites. The protein is Small ribosomal subunit protein uS13 of Ruegeria pomeroyi (strain ATCC 700808 / DSM 15171 / DSS-3) (Silicibacter pomeroyi).